The following is an 834-amino-acid chain: Translation initiation factor IF-2 (834 aa).

The tract at residues 1–247 (MTEEKKFSGS…STPATVRKEQ (247 aa)) is disordered. A compositionally biased stretch (low complexity) spans 45-101 (GGSRPSRPARPNNNNQNRPNNGGQSQNRNNQNRSNTSTGGQNRSNNGGNRNNRPGSR). The segment covering 109–125 (PMIREKKNWSTKPREGQ) has biased composition (basic and acidic residues). Composition is skewed to low complexity over residues 149 to 165 (ASAAAKHPKKPAAATKP) and 173 to 201 (ATKPATASTTTGAGKFGGALASGNNSARN). The span at 224 to 233 (GSKKSRRIAA) shows a compositional bias: basic residues. One can recognise a tr-type G domain in the interval 335 to 504 (SRPPVVTIMG…LLQAEVLELK (170 aa)). The G1 stretch occupies residues 344–351 (GHVDHGKT). Residue 344–351 (GHVDHGKT) coordinates GTP. Positions 369–373 (GITQH) are G2. A G3 region spans residues 390-393 (DTPG). GTP-binding positions include 390–394 (DTPGH) and 444–447 (NKID). Residues 444-447 (NKID) are G4. The interval 480 to 482 (SAK) is G5.

This sequence belongs to the TRAFAC class translation factor GTPase superfamily. Classic translation factor GTPase family. IF-2 subfamily.

It localises to the cytoplasm. In terms of biological role, one of the essential components for the initiation of protein synthesis. Protects formylmethionyl-tRNA from spontaneous hydrolysis and promotes its binding to the 30S ribosomal subunits. Also involved in the hydrolysis of GTP during the formation of the 70S ribosomal complex. The protein is Translation initiation factor IF-2 of Leuconostoc mesenteroides subsp. mesenteroides (strain ATCC 8293 / DSM 20343 / BCRC 11652 / CCM 1803 / JCM 6124 / NCDO 523 / NBRC 100496 / NCIMB 8023 / NCTC 12954 / NRRL B-1118 / 37Y).